We begin with the raw amino-acid sequence, 1025 residues long: MEDHPPKPSIPTADASLSNHGRGGPSLDARFAYFCKTGLSLNENTYTEAMKLFSESKHLLSTTISAIGTGTPEEAERYWFAFVLYSVKRLSEANADDSSQGTGGDGFTLCQILRVAKLNIVDFFKELPQFIVKAGPILSNQYGTDWEKRLEAKELQANFVHLSLLSKYYKRAFREFFLTSDAKVGEQSTAAIASGYVSDYHRFGWLLFLALRTHAFSRFKDLVTCTNGLVAILAILIIHIPVRVRNFNLHDSPRFVMKGSKGVDLLASLCNIYETSEDELRKTMEKANDLIEDILKKNRRSASECRSENLENIATDGLIYFEDLLDDTSLPSSLNILGKDYADATRNKGELDERVFVNEEDSLLGPGSLSGGAMNISGAKRKIDSIASPARTITSPLAPYCSPSASHAKAIPCGSNSKMAATPVTTAMTTAKWLRTIISPLPPKPSPELERFLSSCDSDVTTDVIRRANIILEAIFPSSGLGEECITGGLQCTSLMDSIWAEQRRLEALKLYYRVLQAMCTAEAQILHANNLTSLLTNERFHRCMLACSAELVLATHKTATMLFPAVLERTGITAFDLSKMIGVSFRLKESLPRELKRHLNSLEERLLESMVWEKGSSMYNSLTVARPALSAETNRLCLLAEPMPSLDAIAMHMNITCGSLPCLPSLQKNEILLGQNGDIQSPKRLCTEYRSVLVERNSFTSPVKDRLLTFNTPKSKLPPPALQSAFASPTRPNPGAGGETCAETAINVFFSKIVKLGAFRINGMVERLQLSQEIREIIFRLFQQILSQRTTLFFNRHIDQIILCCFYGVAKISQLSLTFKEIISTIESNPQCKPQVFRSVFVDWSSARRHGKTGQEHVDIITFYNEIFIPAVKPLLVELAPVGTAQKNRNSETINGTDGQCPGSPKISPFPSLPDMSPKKVSAIHNVYVSPLRSSKMDALISNGSKSYYACVGESTHAYQSLSKDLTAINNRLNGNRKLRGTLNFDEVDVGLVSDTLVANSLWLQNGSCASSSGAPVKSERLDS.

A disordered region spans residues 1–20 (MEDHPPKPSIPTADASLSNH). The tract at residues 422-623 (TPVTTAMTTA…EKGSSMYNSL (202 aa)) is domain A. Positions 422-875 (TPVTTAMTTA…NEIFIPAVKP (454 aa)) are pocket. Positions 624 to 744 (TVARPALSAE…PGAGGETCAE (121 aa)) are spacer. Positions 745–875 (TAINVFFSKI…NEIFIPAVKP (131 aa)) are domain B.

The protein belongs to the retinoblastoma protein (RB) family.

The protein resides in the nucleus. Its function is as follows. Regulator of biological processes that recruits a histone deacetylase to control gene transcription. May play a role in the entry into mitosis, negatively regulating the cell proliferation. Formation of stable complexes with geminiviridae replication-associated proteins may create a cellular environment which favors viral DNA replication. In Camellia sinensis (Tea plant), this protein is Retinoblastoma-related protein (pRB).